A 274-amino-acid chain; its full sequence is Ribosomal RNA small subunit methyltransferase A (274 aa).

Asn-27, Leu-29, Gly-54, Glu-75, Asp-100, and Asn-121 together coordinate S-adenosyl-L-methionine.

The protein belongs to the class I-like SAM-binding methyltransferase superfamily. rRNA adenine N(6)-methyltransferase family. RsmA subfamily.

The protein localises to the cytoplasm. The catalysed reaction is adenosine(1518)/adenosine(1519) in 16S rRNA + 4 S-adenosyl-L-methionine = N(6)-dimethyladenosine(1518)/N(6)-dimethyladenosine(1519) in 16S rRNA + 4 S-adenosyl-L-homocysteine + 4 H(+). Specifically dimethylates two adjacent adenosines (A1518 and A1519) in the loop of a conserved hairpin near the 3'-end of 16S rRNA in the 30S particle. May play a critical role in biogenesis of 30S subunits. This chain is Ribosomal RNA small subunit methyltransferase A, found in Acinetobacter baylyi (strain ATCC 33305 / BD413 / ADP1).